Reading from the N-terminus, the 226-residue chain is MRRIGLCISLLVTVLVMSACESEGEAQMFADCDQKTVKQTAAKPMSSKKKQDFQALASDRQLAIVFSSMIQVSEAFDYGIGNPEYFVRISMTEEEADIAKENLESIKLENKSLKKQNSEAVALLQKTRNQDMSRIEIQQLTENRAGFFETADSMIKLINQVTPKNAKKTRQQLDQLKKQYTQYSAESIKIMNSIVKKQKADKASFERHLEALLQKQPGQQVRSELY.

The first 18 residues, 1 to 18 (MRRIGLCISLLVTVLVMS), serve as a signal peptide directing secretion.

This is an uncharacterized protein from Bacillus subtilis (strain 168).